Here is a 64-residue protein sequence, read N- to C-terminus: Small ribosomal subunit protein bS21 (64 aa).

The segment at 40-64 (PPSVKRKIKSQEAQRRMRRTKRKRF) is disordered. The segment covering 55 to 64 (RMRRTKRKRF) has biased composition (basic residues).

It belongs to the bacterial ribosomal protein bS21 family.

This Elusimicrobium minutum (strain Pei191) protein is Small ribosomal subunit protein bS21.